The following is an 81-amino-acid chain: Photosystem I iron-sulfur center (81 aa).

4Fe-4S ferredoxin-type domains follow at residues 2–31 and 39–68; these read AHSVKIYDTCIGCTQCVRACPTDVLEMIPW and IASAPRTEDCVGCKRCESACPTDFLSVRVY. [4Fe-4S] cluster is bound by residues C11, C14, C17, C21, C48, C51, C54, and C58.

The eukaryotic PSI reaction center is composed of at least 11 subunits. [4Fe-4S] cluster serves as cofactor.

The protein localises to the plastid. It localises to the chloroplast thylakoid membrane. It catalyses the reaction reduced [plastocyanin] + hnu + oxidized [2Fe-2S]-[ferredoxin] = oxidized [plastocyanin] + reduced [2Fe-2S]-[ferredoxin]. Apoprotein for the two 4Fe-4S centers FA and FB of photosystem I (PSI); essential for photochemical activity. FB is the terminal electron acceptor of PSI, donating electrons to ferredoxin. The C-terminus interacts with PsaA/B/D and helps assemble the protein into the PSI complex. Required for binding of PsaD and PsaE to PSI. PSI is a plastocyanin-ferredoxin oxidoreductase, converting photonic excitation into a charge separation, which transfers an electron from the donor P700 chlorophyll pair to the spectroscopically characterized acceptors A0, A1, FX, FA and FB in turn. This is Photosystem I iron-sulfur center from Psilotum nudum (Whisk fern).